Consider the following 367-residue polypeptide: Aminomethyltransferase (367 aa).

It belongs to the GcvT family. As to quaternary structure, the glycine cleavage system is composed of four proteins: P, T, L and H.

The catalysed reaction is N(6)-[(R)-S(8)-aminomethyldihydrolipoyl]-L-lysyl-[protein] + (6S)-5,6,7,8-tetrahydrofolate = N(6)-[(R)-dihydrolipoyl]-L-lysyl-[protein] + (6R)-5,10-methylene-5,6,7,8-tetrahydrofolate + NH4(+). The glycine cleavage system catalyzes the degradation of glycine. This chain is Aminomethyltransferase, found in Saccharopolyspora erythraea (strain ATCC 11635 / DSM 40517 / JCM 4748 / NBRC 13426 / NCIMB 8594 / NRRL 2338).